The following is a 275-amino-acid chain: Tumor necrosis factor-inducible gene 6 protein (275 aa).

The N-terminal stretch at 1 to 17 (MVVLLCLCVLLWEEAHG) is a signal peptide. The Link domain maps to 36–129 (GVYHREARAG…SERWDAYCYN (94 aa)). 3 cysteine pairs are disulfide-bonded: Cys-58/Cys-127, Cys-82/Cys-103, and Cys-135/Cys-161. Asn-118 is a glycosylation site (N-linked (GlcNAc...) asparagine). The 113-residue stretch at 135–247 (CGGVFTDPKR…GGFQIKYVTV (113 aa)) folds into the CUB domain. Glu-183, Asp-191, Asp-232, Ser-234, and Val-235 together coordinate Ca(2+). An intrachain disulfide couples Cys-188 to Cys-210. The segment covering 253–264 (SSQAKNTSTTGN) has biased composition (polar residues). The disordered stretch occupies residues 253-275 (SSQAKNTSTTGNKKFLPGRFSHL). N-linked (GlcNAc...) asparagine glycosylation occurs at Asn-258.

Interacts (via Link domain) with inter-alpha-inhibitor (I-alpha-I) component bikunin. Interacts with ITIH2/HC2; this interaction is required for transesterification of the HC to hyaluronan. Interacts (via Link and CUB domains) with ITIH1. Chondroitin sulfate may be required for the stability of the complex. Interacts (via Link domain) with various C-X-C and C-C chemokines including PF4, CXCL8, CXCL11, CXCL12, CCL2, CCL7, CCL19, CCL21, and CCL27; this interaction interferes with chemokine binding to glycosaminoglycans. Interacts (primarily via Link domain) with BMP2; this interaction is inhibited by hyaluronan. Interacts (via both Link and CUB domains) with TNFSF11. Interacts (via CUB domain) with FN1 (via type III repeats 9-14); this interaction enhances fibronectin fibril assembly. TNFAIP6 may act as a bridging molecule between FN1 and THBS1. As to expression, expressed in epiphyseal and metaphyseal bone marrow of both the femur and tibia (at protein level).

It localises to the secreted. In terms of biological role, major regulator of extracellular matrix organization during tissue remodeling. Catalyzes the transfer of a heavy chain (HC) from inter-alpha-inhibitor (I-alpha-I) complex to hyaluronan. Cleaves the ester bond between the C-terminus of the HC and GalNAc residue of the chondroitin sulfate chain in I-alpha-I complex followed by transesterification of the HC to hyaluronan. In the process, potentiates the antiprotease function of I-alpha-I complex through release of free bikunin. Acts as a catalyst in the formation of hyaluronan-HC oligomers and hyaluronan-rich matrix surrounding the cumulus cell-oocyte complex, a necessary step for oocyte fertilization. Assembles hyaluronan in pericellular matrices that serve as platforms for receptor clustering and signaling. Enables binding of hyaluronan deposited on the surface of macrophages to LYVE1 on lymphatic endothelium and facilitates macrophage extravasation. Alters hyaluronan binding to functionally latent CD44 on vascular endothelium, switching CD44 into an active state that supports leukocyte rolling. Modulates the interaction of chemokines with extracellular matrix components and proteoglycans on endothelial cell surface, likely preventing chemokine gradient formation. In a negative feedback mechanism, may limit excessive neutrophil recruitment at inflammatory sites by antagonizing the association of CXCL8 with glycosaminoglycans on vascular endothelium. Has a role in osteogenesis and bone remodeling. Inhibits BMP2-dependent differentiation of mesenchymal stem cell to osteoblasts. Protects against bone erosion during inflammation by inhibiting TNFSF11/RANKL-dependent osteoclast activation. This Mus musculus (Mouse) protein is Tumor necrosis factor-inducible gene 6 protein (Tnfaip6).